The sequence spans 209 residues: Protein-L-isoaspartate O-methyltransferase (209 aa).

The active site involves Ser60.

The protein belongs to the methyltransferase superfamily. L-isoaspartyl/D-aspartyl protein methyltransferase family.

The protein localises to the cytoplasm. The catalysed reaction is [protein]-L-isoaspartate + S-adenosyl-L-methionine = [protein]-L-isoaspartate alpha-methyl ester + S-adenosyl-L-homocysteine. Catalyzes the methyl esterification of L-isoaspartyl residues in peptides and proteins that result from spontaneous decomposition of normal L-aspartyl and L-asparaginyl residues. It plays a role in the repair and/or degradation of damaged proteins. This chain is Protein-L-isoaspartate O-methyltransferase, found in Methanococcus vannielii (strain ATCC 35089 / DSM 1224 / JCM 13029 / OCM 148 / SB).